The primary structure comprises 1580 residues: Collagen alpha-1(XVI) chain (1580 aa).

Residues 1–21 (MLTSWAPGLWVLGLWATFSHG) form the signal peptide. Residue Asn-47 is glycosylated (N-linked (GlcNAc...) asparagine). A Laminin G-like domain is found at 50-231 (GFNLIRRLNL…LQQAHIYCDP (182 aa)). The segment at 232 to 374 (ELVLEEGCCE…SPDAPLQCVE (143 aa)) is nonhelical region 10 (NC10). Residues 324 to 547 (RESNVTLGPS…DPAPAWEGLG (224 aa)) are disordered. A glycan (N-linked (GlcNAc...) asparagine) is linked at Asn-327. The region spanning 375-424 (GPKGEKGESGDLGPPGLPGPTGQKGQKGEKGDGGLKGLPGKPGRDGRPGE) is the Collagen-like 1 domain. The interval 375 to 509 (GPKGEKGESG…PGTKGEKGDP (135 aa)) is triple-helical region 9 (COL9) with 3 imperfections. A compositionally biased stretch (pro residues) spans 449 to 460 (PGPPGLPGPPGI). Over residues 486–495 (GKEGPGGKPG) the composition is skewed to gly residues. The interval 510-524 (CEVCPTLPEGSQNFV) is nonhelical region 9 (NC9). The interval 525–570 (GLPGKPGPKGEPGDPAPAWEGLGTVGLKGDRGDPGIQGMKGEKGEP) is triple-helical region 8 (COL8) with 1 imperfection. The short motif at 555–557 (RGD) is the Cell attachment site element. The nonhelical region 8 (NC8) stretch occupies residues 571–586 (CSSCSSGVGAQHLGPS). Low complexity predominate over residues 585 to 598 (PSPGHGLPGLPGTS). Positions 585–935 (PSPGHGLPGL…LPGQPGLTAE (351 aa)) are disordered. Residues 587-640 (PGHGLPGLPGTSGIPGPRGLKGEKGSFGDTGPAGVPGSPGPVGPAGIKGAKGEP) form a triple-helical region 7 (COL7) with 1 imperfection region. 2 consecutive Collagen-like domains span residues 590-643 (GLPG…PCEP) and 676-725 (GLPG…PAGP). Positions 641-661 (CEPCTALSELQDGDMRVVHLP) are nonhelical region 7 (NC7). The triple-helical region 6 (COL6) with 1 imperfection stretch occupies residues 662 to 732 (GPAGEKGEPG…AGPKGEKGDG (71 aa)). The segment covering 683-693 (KAGERGLKGQK) has biased composition (basic and acidic residues). The span at 698-714 (NPGDPGTPGITGQPGIS) shows a compositional bias: low complexity. Positions 733 to 747 (CTACPSLQGALTDVS) are nonhelical region 6 (NC6). The interval 748-870 (GLPGKPGPKG…RGEKGEPGEC (123 aa)) is triple-helical region 5 (COL5) with 3 imperfections. Positions 797-848 (GAEGPQGEPGTQGLPGTQGLPGPRGPPGSAGEKGAQGSPGPKGAIGPMGPPG) constitute a Collagen-like 4 domain. Low complexity predominate over residues 801-817 (PQGEPGTQGLPGTQGLP). Positions 871–881 (SCPSRGEPIFS) are nonhelical region 5 (NC5). The triple-helical region 4 (COL4) with 2 imperfections stretch occupies residues 882 to 933 (GMPGAPGLWMGSSSQPGPQGPPGVPGPPGPPGMPGLQGVPGHNGLPGQPGLT). The span at 899-914 (PQGPPGVPGPPGPPGM) shows a compositional bias: pro residues. The tract at residues 934-967 (AELGSLPIEKHLLKSICGDCAQGQTAHPAFLLEK) is nonhelical region 4 (NC4). The triple-helical region 3 (COL3) stretch occupies residues 968–982 (GEKGDQGIPGVPGFD). The interval 983–1005 (NCARCFIERERPRAEEARGDNSE) is nonhelical region 3 (NC3). Disordered regions lie at residues 995–1405 (RAEE…LPGS) and 1445–1523 (AAAP…GYGK). The Cell attachment site signature appears at 1000-1002 (RGD). The region spanning 1006–1063 (GEPGCSGSPGLPGPPGMPGQRGEEGPPGMRGSPGPPGPIGLQGERGLTGLTGDKGEPG) is the Collagen-like 5 domain. The segment at 1006 to 1409 (GEPGCSGSPG…PGLPGSMGDM (404 aa)) is triple-helical region 2 (COL2) with 2 imperfections. The span at 1098-1107 (SGPPGSEGLP) shows a compositional bias: low complexity. Composition is skewed to pro residues over residues 1139 to 1148 (FPGPPGPPGF) and 1178 to 1187 (SPGPPGPPGI). The span at 1196-1205 (LDGKDGKPGL) shows a compositional bias: basic and acidic residues. A Cell attachment site motif is present at residues 1206–1208 (RGD). Residues 1210–1263 (GPAGPPGLMGPPGFKGKTGHPGLPGPKGDCGKPGPPGSSGRPGAEGEPGAMGPQ) form the Collagen-like 6 domain. Positions 1247-1263 (SSGRPGAEGEPGAMGPQ) are enriched in low complexity. The span at 1265 to 1281 (RPGPPGHLGPPGQPGPP) shows a compositional bias: pro residues. 3 consecutive Collagen-like domains span residues 1350–1407 (GQKG…GSMG), 1448–1500 (PGRP…GDIG), and 1504–1552 (AGEN…GKAG). A compositionally biased stretch (gly residues) spans 1362–1371 (GMPGGPGKSG). Low complexity predominate over residues 1396–1405 (NPGLPGLPGS). Residues 1410–1448 (VNYDDIKRFIRQEIIKLFDERMAYYTSRMQFPMEVAAAP) form a nonhelical region 2 (NC2) region. The segment at 1449 to 1554 (GRPGPPGKDG…MGQPGKAGHC (106 aa)) is triple-helical region 1 (COL1) with 2 imperfections. Positions 1555–1580 (NPSDCFGAMPMEQQYPPMKSMKGPFG) are nonhelical region 1 (NC1).

This sequence belongs to the fibril-associated collagens with interrupted helices (FACIT) family. As to quaternary structure, homotrimer. Interacts with FBN1, fibronectin and integrins ITGA1/ITGB1 and ITGA2/ITGB1. Integrin ITGA1/ITGB1 binds to a unique site within COL16A1 located close to its C-terminal end between collagenous domains COL1-COL3. In terms of processing, prolines at the third position of the tripeptide repeating unit (G-X-Y) are hydroxylated in some or all of the chains. Glycosylated. In terms of tissue distribution, expressed in most tissues examined with highest levels of expression observed in heart. Strongly expressed in cortical and medullar regions of kidney and more weakly expressed in lung. Also detected in the ciliary muscle of the eye, on the serosa layer lining the muscularis externa of intestinal tissue, and in the perimysium membrane lining both the cardiac muscle bundle and the smooth muscle tissue of the small intestine. Strongly stained in particulate or granular structures. Not detected in brain or skeletal muscle.

It localises to the secreted. Its subcellular location is the extracellular space. The protein resides in the extracellular matrix. Its function is as follows. Involved in mediating cell attachment and inducing integrin-mediated cellular reactions, such as cell spreading and alterations in cell morphology. The polypeptide is Collagen alpha-1(XVI) chain (Mus musculus (Mouse)).